A 143-amino-acid chain; its full sequence is Competence protein ComGD (143 aa).

Positions methionine 1 to glycine 10 are excised as a propeptide. The residue at position 11 (phenylalanine 11) is an N-methylphenylalanine. Residues phenylalanine 11–phenylalanine 31 form a helical membrane-spanning segment.

As to quaternary structure, the transformation pili are flexible filaments, consisting mainly of the major pilin ComGC and smaller amounts of the minor pilins, including at least ComGD, ComGF and ComGG. Interacts with ComGF. Interacts with ComGG. Processing of ComGD in competent cells requires ComC.

Its subcellular location is the cell membrane. It is found in the cell surface. In terms of biological role, required for formation of the type IV-like pilus (T4P) that plays a role in transformation. Transformation pili are dynamically extended and retracted, perhaps thereby promoting DNA uptake and transformation. Required for transformation and DNA binding. This chain is Competence protein ComGD (comGD), found in Bacillus subtilis (strain 168).